A 139-amino-acid polypeptide reads, in one-letter code: Asp-hemolysin (139 aa).

Positions 1-5 (MASVQ) are excised as a propeptide. The interval 47–79 (TSEDVQQKTAPPGGSVNVNSCGRSDASSGTTGG) is disordered. Over residues 62 to 75 (VNVNSCGRSDASSG) the composition is skewed to polar residues.

Belongs to the aegerolysin family.

This chain is Asp-hemolysin, found in Aspergillus fumigatus (strain ATCC MYA-4609 / CBS 101355 / FGSC A1100 / Af293) (Neosartorya fumigata).